The following is a 208-amino-acid chain: Type 3 secretion system stator protein (208 aa).

It belongs to the SctL stator family. The core secretion machinery of the T3SS is composed of approximately 20 different proteins, including cytoplasmic components, a base, an export apparatus and a needle. This subunit is part of the cytosolic complex.

It localises to the cytoplasm. Component of the type III secretion system (T3SS), also called injectisome, which is used to inject bacterial effector proteins into eukaryotic host cells. Acts as a regulator of the HrcN/SctN ATPase activity. This chain is Type 3 secretion system stator protein, found in Sinorhizobium fredii (strain NBRC 101917 / NGR234).